Consider the following 245-residue polypeptide: Adenosine 5'-phosphosulfate reductase (245 aa).

The [4Fe-4S] cluster site is built by C124, C125, C205, and C208. C231 functions as the Nucleophile; cysteine thiosulfonate intermediate in the catalytic mechanism.

It belongs to the PAPS reductase family. CysH subfamily. [4Fe-4S] cluster is required as a cofactor.

Its subcellular location is the cytoplasm. The catalysed reaction is [thioredoxin]-disulfide + sulfite + AMP + 2 H(+) = adenosine 5'-phosphosulfate + [thioredoxin]-dithiol. The protein operates within sulfur metabolism; hydrogen sulfide biosynthesis; sulfite from sulfate. Its function is as follows. Catalyzes the formation of sulfite from adenosine 5'-phosphosulfate (APS) using thioredoxin as an electron donor. The protein is Adenosine 5'-phosphosulfate reductase of Chelativorans sp. (strain BNC1).